Consider the following 134-residue polypeptide: Small ribosomal subunit protein uS8c (134 aa).

This sequence belongs to the universal ribosomal protein uS8 family. In terms of assembly, part of the 30S ribosomal subunit.

The protein localises to the plastid. It localises to the chloroplast. Functionally, one of the primary rRNA binding proteins, it binds directly to 16S rRNA central domain where it helps coordinate assembly of the platform of the 30S subunit. The chain is Small ribosomal subunit protein uS8c (rps8) from Lepidium virginicum (Virginia pepperweed).